The primary structure comprises 986 residues: Probable serine/threonine-protein kinase DDB_G0272092 (986 aa).

A C2 domain is found at 1–107; the sequence is MARKIGSVRI…EYIVDTTKWY (107 aa). Ca(2+) is bound by residues D22, D28, D76, D78, S81, and D84. ANK repeat units follow at residues 137–167, 171–201, 205–238, 242–274, 278–307, and 312–344; these read PEKS…DYTI, EGTP…RVSI, HGNT…GIND, LGET…IINH, TRDT…NVMI, and PSRT…WLNE. The SAM domain occupies 333-396; it reads EKVIEISDWL…LRAVRKIKDP (64 aa). Positions 412–438 are enriched in low complexity; that stretch reads HVENDNNNNNNNNNNNNNSQEQCNINN. Disordered stretches follow at residues 412–520 and 532–574; these read HVEN…SNTT and TTLT…PEGP. Over residues 439 to 448 the composition is skewed to polar residues; the sequence is DSLGSGNRNS. Residues 454–464 are compositionally biased toward low complexity; it reads QNQNNTLNNNN. The segment covering 465 to 476 has biased composition (polar residues); that stretch reads VESKSTGNLNSL. Low complexity-rich tracts occupy residues 493-520 and 546-571; these read NILS…SNTT and TEST…TVTP. Positions 601–870 constitute a Protein kinase domain; the sequence is LTYNVLLGTG…ELLKIRDEYN (270 aa). ATP-binding positions include 607-615 and K628; that span reads LGTGASGKV. Catalysis depends on D722, which acts as the Proton acceptor. Low complexity-rich tracts occupy residues 901–913 and 928–947; these read DSNN…NNNN and SNSN…SDNN. Residues 901–986 form a disordered region; the sequence is DSNNINNNNN…SPMEPKSIKK (86 aa). 2 stretches are compositionally biased toward polar residues: residues 948-959 and 969-978; these read ISEPATTDSITK and LTRTRSSSSP.

It belongs to the protein kinase superfamily. TKL Ser/Thr protein kinase family. Ca(2+) serves as cofactor.

It carries out the reaction L-seryl-[protein] + ATP = O-phospho-L-seryl-[protein] + ADP + H(+). The catalysed reaction is L-threonyl-[protein] + ATP = O-phospho-L-threonyl-[protein] + ADP + H(+). This is Probable serine/threonine-protein kinase DDB_G0272092 from Dictyostelium discoideum (Social amoeba).